The sequence spans 456 residues: tRNA modification GTPase MnmE (456 aa).

Arginine 24, glutamate 81, and lysine 120 together coordinate (6S)-5-formyl-5,6,7,8-tetrahydrofolate. A TrmE-type G domain is found at 216–379 (GMTVVIAGRP…LREHLKACMG (164 aa)). Asparagine 226 contributes to the K(+) binding site. GTP contacts are provided by residues 226-231 (NAGKSS), 245-251 (TEIAGTT), 270-273 (DTAG), 335-338 (NKAD), and 359-361 (SAR). Serine 230 contributes to the Mg(2+) binding site. Threonine 245, isoleucine 247, and threonine 250 together coordinate K(+). Residue threonine 251 coordinates Mg(2+). Lysine 456 contributes to the (6S)-5-formyl-5,6,7,8-tetrahydrofolate binding site.

This sequence belongs to the TRAFAC class TrmE-Era-EngA-EngB-Septin-like GTPase superfamily. TrmE GTPase family. As to quaternary structure, homodimer. Heterotetramer of two MnmE and two MnmG subunits. Requires K(+) as cofactor.

It localises to the cytoplasm. Exhibits a very high intrinsic GTPase hydrolysis rate. Involved in the addition of a carboxymethylaminomethyl (cmnm) group at the wobble position (U34) of certain tRNAs, forming tRNA-cmnm(5)s(2)U34. In Pseudomonas syringae pv. tomato (strain ATCC BAA-871 / DC3000), this protein is tRNA modification GTPase MnmE.